Here is a 256-residue protein sequence, read N- to C-terminus: Ubiquinone/menaquinone biosynthesis C-methyltransferase UbiE (256 aa).

Residues Thr79, Asp100, and 128-129 (DA) each bind S-adenosyl-L-methionine.

The protein belongs to the class I-like SAM-binding methyltransferase superfamily. MenG/UbiE family.

It carries out the reaction a 2-demethylmenaquinol + S-adenosyl-L-methionine = a menaquinol + S-adenosyl-L-homocysteine + H(+). The catalysed reaction is a 2-methoxy-6-(all-trans-polyprenyl)benzene-1,4-diol + S-adenosyl-L-methionine = a 5-methoxy-2-methyl-3-(all-trans-polyprenyl)benzene-1,4-diol + S-adenosyl-L-homocysteine + H(+). The protein operates within quinol/quinone metabolism; menaquinone biosynthesis; menaquinol from 1,4-dihydroxy-2-naphthoate: step 2/2. It participates in cofactor biosynthesis; ubiquinone biosynthesis. Functionally, methyltransferase required for the conversion of demethylmenaquinol (DMKH2) to menaquinol (MKH2) and the conversion of 2-polyprenyl-6-methoxy-1,4-benzoquinol (DDMQH2) to 2-polyprenyl-3-methyl-6-methoxy-1,4-benzoquinol (DMQH2). This Pseudomonas savastanoi pv. phaseolicola (strain 1448A / Race 6) (Pseudomonas syringae pv. phaseolicola (strain 1448A / Race 6)) protein is Ubiquinone/menaquinone biosynthesis C-methyltransferase UbiE.